We begin with the raw amino-acid sequence, 467 residues long: Methionine aminopeptidase 2-1 (467 aa).

Residues methionine 1–arginine 10 show a composition bias toward basic and acidic residues. A disordered region spans residues methionine 1–isoleucine 105. Residues aspartate 43–glycine 55 show a composition bias toward acidic residues. Residues lysine 75–serine 90 show a composition bias toward basic residues. Residue histidine 219 coordinates substrate. A divalent metal cation is bound by residues aspartate 240, aspartate 251, and histidine 320. Histidine 328 contacts substrate. A divalent metal cation contacts are provided by glutamate 353 and glutamate 448.

The protein belongs to the peptidase M24A family. Methionine aminopeptidase eukaryotic type 2 subfamily. Co(2+) serves as cofactor. It depends on Zn(2+) as a cofactor. Mn(2+) is required as a cofactor. Requires Fe(2+) as cofactor.

It is found in the cytoplasm. It catalyses the reaction Release of N-terminal amino acids, preferentially methionine, from peptides and arylamides.. Its function is as follows. Cotranslationally removes the N-terminal methionine from nascent proteins. The N-terminal methionine is often cleaved when the second residue in the primary sequence is small and uncharged (Met-Ala-, Cys, Gly, Pro, Ser, Thr, or Val). The chain is Methionine aminopeptidase 2-1 from Arthroderma gypseum (strain ATCC MYA-4604 / CBS 118893) (Microsporum gypseum).